The chain runs to 58 residues: COP9 signalosome complex subunit 6b (58 aa).

The protein belongs to the peptidase M67A family. CSN6 subfamily. As to quaternary structure, component of the CSN complex, probably composed of CSN1, CSN2, CSN3, CSN4, CSN5 (CSN5A or CSN5B), CSN6 (CSN6A or CSN6B), CSN7 and CSN8.

It localises to the cytoplasm. Its subcellular location is the nucleus. In terms of biological role, component of the COP9 signalosome complex (CSN), a complex involved in various cellular and developmental processes such as photomorphogenesis and auxin and jasmonate responses. The CSN complex is an essential regulator of the ubiquitin (Ubl) conjugation pathway by mediating the deneddylation of the cullin subunits of SCF-type E3 ligase complexes, leading to decrease the Ubl ligase activity of SCF. It is involved in repression of photomorphogenesis in darkness by regulating the activity of COP1-containing Ubl ligase complexes. This Brassica oleracea (Wild cabbage) protein is COP9 signalosome complex subunit 6b (CSN6B).